The following is a 312-amino-acid chain: Ribonuclease Z (312 aa).

The Zn(2+) site is built by His62, His64, Asp66, His67, His139, Asp210, and His268. Asp66 functions as the Proton acceptor in the catalytic mechanism.

Belongs to the RNase Z family. As to quaternary structure, homodimer. Zn(2+) is required as a cofactor.

It carries out the reaction Endonucleolytic cleavage of RNA, removing extra 3' nucleotides from tRNA precursor, generating 3' termini of tRNAs. A 3'-hydroxy group is left at the tRNA terminus and a 5'-phosphoryl group is left at the trailer molecule.. Functionally, zinc phosphodiesterase, which displays some tRNA 3'-processing endonuclease activity. Probably involved in tRNA maturation, by removing a 3'-trailer from precursor tRNA. This is Ribonuclease Z from Crocosphaera subtropica (strain ATCC 51142 / BH68) (Cyanothece sp. (strain ATCC 51142)).